The sequence spans 350 residues: UPF0284 protein MJ1598 (350 aa).

The protein belongs to the UPF0284 family.

This chain is UPF0284 protein MJ1598, found in Methanocaldococcus jannaschii (strain ATCC 43067 / DSM 2661 / JAL-1 / JCM 10045 / NBRC 100440) (Methanococcus jannaschii).